The primary structure comprises 287 residues: Bifunctional protein FolD (287 aa).

Residues 166–168 (GAS) and I232 contribute to the NADP(+) site.

The protein belongs to the tetrahydrofolate dehydrogenase/cyclohydrolase family. In terms of assembly, homodimer.

It carries out the reaction (6R)-5,10-methylene-5,6,7,8-tetrahydrofolate + NADP(+) = (6R)-5,10-methenyltetrahydrofolate + NADPH. The catalysed reaction is (6R)-5,10-methenyltetrahydrofolate + H2O = (6R)-10-formyltetrahydrofolate + H(+). It participates in one-carbon metabolism; tetrahydrofolate interconversion. Its function is as follows. Catalyzes the oxidation of 5,10-methylenetetrahydrofolate to 5,10-methenyltetrahydrofolate and then the hydrolysis of 5,10-methenyltetrahydrofolate to 10-formyltetrahydrofolate. The chain is Bifunctional protein FolD from Pectobacterium atrosepticum (strain SCRI 1043 / ATCC BAA-672) (Erwinia carotovora subsp. atroseptica).